Here is a 678-residue protein sequence, read N- to C-terminus: Auxin response factor 7 (678 aa).

Positions 128–230 (FCKTLTASDT…ELRVGVRRLM (103 aa)) form a DNA-binding region, TF-B3. 2 disordered regions span residues 360–386 (AVSN…NSIA) and 502–547 (GVGQ…SRQV). Positions 548–641 (RSCTKVIMQG…EAKQLTPKSK (94 aa)) constitute a PB1 domain. The interval 643–678 (PIIGDAIKPNPNKQSPESDMPHSDLDSTAPVTDKDC) is disordered.

This sequence belongs to the ARF family. As to quaternary structure, homodimers and heterodimers. Expressed in roots, culms, leaves and young panicles.

It localises to the nucleus. In terms of biological role, auxin response factors (ARFs) are transcriptional factors that bind specifically to the DNA sequence 5'-TGTCTC-3' found in the auxin-responsive promoter elements (AuxREs). This chain is Auxin response factor 7 (ARF7), found in Oryza sativa subsp. japonica (Rice).